Reading from the N-terminus, the 517-residue chain is Lysophosphatidylcholine acyltransferase 2B (517 aa).

Asn29 carries an N-linked (GlcNAc...) asparagine glycan. 3 helical membrane passes run 70–90 (IVFL…NLPI), 103–123 (LIKP…GFLI), and 137–157 (IFVV…VAGL). An HXXXXD motif motif is present at residues 143–148 (HSTFFD). 2 consecutive EF-hand domains span residues 388 to 423 (PISE…LCNP) and 425 to 460 (NTEK…AFGV). 10 residues coordinate Ca(2+): Asp401, Asn403, Asp405, Thr407, Glu412, Asp438, Asp440, Asp442, Tyr444, and Glu449.

It belongs to the 1-acyl-sn-glycerol-3-phosphate acyltransferase family.

The protein localises to the membrane. It functions in the pathway lipid metabolism; phospholipid metabolism. In terms of biological role, probable acetyltransferase. This chain is Lysophosphatidylcholine acyltransferase 2B (Lpcat2b), found in Rattus norvegicus (Rat).